The primary structure comprises 366 residues: N-methyltransferase fsqC (366 aa).

A signal peptide spans 1–18; that stretch reads MSSNVQDIRGWPPPFANA. Residue N270 is glycosylated (N-linked (GlcNAc...) asparagine).

Belongs to the methyltransferase superfamily.

It functions in the pathway secondary metabolite biosynthesis. N-methyltransferase; part of the gene cluster that mediates the biosynthesis of the isoquinoline alkaloids fumisoquin A, fumisoquin B and fumisoquin C; as well as small amounts of fumipyrrole as a shunt metabolite. The products of the cluster lead to a brown coloration and are important for growth and conidiation. The nonribosomal peptide synthetase-like protein fsqF, which lacks a canonical condensation domain, is required for addition of a serine-derived dehydroalanine moiety to activated tyrosine but is not essential for the subsequent steps leading to isoquinoline formation. A different enzyme, most likely the ATP-grasp enzyme fsqD, is responsible for activation of tyrosine. Three additional enzymes encoded by the fsq cluster, the N-methyltransferase fsqC, the phenol 2-monooxygenase fsqG and the FAD-dependent oxidase fsqB, catalyze the formation of the isoquinoline ring system in the fumisoquins. FsqB converts the fspF thiolation domain-bound (2S,4S,5S)-2-amino-6-(3,4-dihydroxyphenyl)-4-hydroxy-5-(methylamino)hexanoyl into isoquinoline. The cyclization most likely proceeds via a two-step mechanism, beginning with FAD-dependent oxidation of the methyl group to an iminium species followed by electrophilic attack on the deprotonated phenol. This is N-methyltransferase fsqC from Aspergillus fumigatus (strain ATCC MYA-4609 / CBS 101355 / FGSC A1100 / Af293) (Neosartorya fumigata).